The sequence spans 324 residues: Proto-oncogene Mas (324 aa).

The Extracellular segment spans residues 1–35 (MDQSNMTSLAEEKAMNTSSRNASLGSSHPPIPIVH). Residues asparagine 5, asparagine 16, and asparagine 21 are each glycosylated (N-linked (GlcNAc...) asparagine). The chain crosses the membrane as a helical span at residues 36 to 60 (WVIMSISPLGFVENGILLWFLCFRM). At 61-64 (RRNP) the chain is on the cytoplasmic side. A helical transmembrane segment spans residues 65 to 86 (FTVYITHLSIADISLLFCIFIL). Residues 87 to 103 (SIDYALDYELSSGHHYT) are Extracellular-facing. Residues 104–127 (IVTLSVTFLFGYNTGLYLLTAISV) form a helical membrane-spanning segment. The Cytoplasmic portion of the chain corresponds to 128 to 148 (ERCLSVLYPIWYRCHRPKHQS). The helical transmembrane segment at 149-171 (AFVCALLWALSCLVTTMEYVMCI) threads the bilayer. Residues 172-184 (DSGEESHSRSDCR) lie on the Extracellular side of the membrane. Residues 185–205 (AVIIFIAILSFLVFTPLMLVS) traverse the membrane as a helical segment. The Cytoplasmic portion of the chain corresponds to 206 to 223 (STILVVKIRKNTWASHSS). A helical transmembrane segment spans residues 224-244 (KLYIVIMVTIIIFLIFAMPMR). The Extracellular segment spans residues 245-262 (VLYLLYYEYWSAFGNLHN). A helical transmembrane segment spans residues 263 to 283 (ISLLFSTINSSANPFIYFFVG). At 284–324 (SSKKKRFRESLKVVLTRAFKDEMQPRRQEGNGNTVSIETVV) the chain is on the cytoplasmic side.

The protein belongs to the G-protein coupled receptor 1 family. Interacts with AGTR1. Interacts with FLNA (via filamin repeat 21); increases PKA-mediated phosphorylation of FLNA.

The protein resides in the cell membrane. In terms of biological role, acts specifically as a functional antagonist of AGTR1 (angiotensin-2 type 1 receptor), although it up-regulates AGTR1 receptor levels. Positive regulation of AGTR1 levels occurs through activation of the G-proteins GNA11 and GNAQ, and stimulation of the protein kinase C signaling cascade. The antagonist effect on AGTR1 function is probably due to AGTR1 being physically altered by MAS1. Receptor for angiotensin 1-7. The chain is Proto-oncogene Mas (Mas1) from Mus musculus (Mouse).